The following is a 305-amino-acid chain: NAD kinase 2 (305 aa).

The Proton acceptor role is filled by Asp-78. Residues 78–79 (DG), 152–153 (NE), Asp-182, 193–198 (TAYSLS), and Asn-251 each bind NAD(+).

It belongs to the NAD kinase family. The cofactor is a divalent metal cation.

It localises to the cytoplasm. It catalyses the reaction NAD(+) + ATP = ADP + NADP(+) + H(+). Its function is as follows. Involved in the regulation of the intracellular balance of NAD and NADP, and is a key enzyme in the biosynthesis of NADP. Catalyzes specifically the phosphorylation on 2'-hydroxyl of the adenosine moiety of NAD to yield NADP. Functions as a growth repressor under light-activated heterotrophic growth conditions and light and dark cycle conditions in the presence of glucose. NADP(H)/NAD(H) maintenance by slr0400 probably plays a significant role in modulating glycolysis and the TCA cycle to repress the growth rate and maintain the photosynthetic capacity. In Synechocystis sp. (strain ATCC 27184 / PCC 6803 / Kazusa), this protein is NAD kinase 2.